The chain runs to 51 residues: Magnetosome protein Mms5 (51 aa).

Residues 1–8 (MLSAKGVS) are Lumenal-facing. Residues 9-16 (LGLGLGLG) form an LG region region. A helical transmembrane segment spans residues 9-29 (LGLGLGLGAWGPVLLGVVGVA). Topologically, residues 30–51 (GALALYGYYKNRNAEPAAAEAV) are cytoplasmic.

It belongs to the magnetosome MamD/Mms5 family. Post-translationally, may undergo N-terminal cleavage.

The protein localises to the magnetosome membrane. In terms of biological role, might be involved in magnetite crystal growth. The protein is Magnetosome protein Mms5 of Magnetospirillum gryphiswaldense (strain DSM 6361 / JCM 21280 / NBRC 15271 / MSR-1).